A 197-amino-acid chain; its full sequence is Ribonuclease HII (197 aa).

The 188-residue stretch at 10–197 (ELIAGVDEVG…APVRKLLNTL (188 aa)) folds into the RNase H type-2 domain. A divalent metal cation is bound by residues Asp16, Glu17, and Asp108.

It belongs to the RNase HII family. Requires Mn(2+) as cofactor. The cofactor is Mg(2+).

The protein resides in the cytoplasm. The enzyme catalyses Endonucleolytic cleavage to 5'-phosphomonoester.. Endonuclease that specifically degrades the RNA of RNA-DNA hybrids. The polypeptide is Ribonuclease HII (rnhB) (Pasteurella multocida (strain Pm70)).